The primary structure comprises 376 residues: DNA methyltransferase CcrM (376 aa).

One can recognise an RAMA domain in the interval 273–370 (KATLSVMTGK…IDELRSVIRN (98 aa)).

It belongs to the N(4)/N(6)-methyltransferase family.

The catalysed reaction is a 2'-deoxyadenosine in DNA + S-adenosyl-L-methionine = an N(6)-methyl-2'-deoxyadenosine in DNA + S-adenosyl-L-homocysteine + H(+). A beta subtype methylase that recognizes the double-stranded sequence 5'-GANTC-3' and methylates A-2 on both strands. Overexpression leads to many branched and bloated cells, two to three times the size of wild-type cells, and cells that have 1-3 times the normal amount of DNA. Contributes to the accurate cell-cycle control of DNA replication and cellular morphology. Can fully replace its ortholog in C.crescentus. In Rhizobium meliloti (strain 1021) (Ensifer meliloti), this protein is DNA methyltransferase CcrM (smeIM).